The sequence spans 142 residues: Transcriptional regulator MraZ (142 aa).

2 consecutive SpoVT-AbrB domains span residues 5–51 and 77–120; these read ASAL…PRPE and AMDV…DSQT.

Belongs to the MraZ family. Forms oligomers.

It is found in the cytoplasm. It localises to the nucleoid. The protein is Transcriptional regulator MraZ of Burkholderia cenocepacia (strain ATCC BAA-245 / DSM 16553 / LMG 16656 / NCTC 13227 / J2315 / CF5610) (Burkholderia cepacia (strain J2315)).